Consider the following 491-residue polypeptide: Cobyric acid synthase (491 aa).

Positions 250-439 (EVTIAVIRLP…LHGIFDNGAW (190 aa)) constitute a GATase cobBQ-type domain. C331 (nucleophile) is an active-site residue. H431 is an active-site residue.

This sequence belongs to the CobB/CobQ family. CobQ subfamily.

It participates in cofactor biosynthesis; adenosylcobalamin biosynthesis. Functionally, catalyzes amidations at positions B, D, E, and G on adenosylcobyrinic A,C-diamide. NH(2) groups are provided by glutamine, and one molecule of ATP is hydrogenolyzed for each amidation. The polypeptide is Cobyric acid synthase (Synechococcus elongatus (strain ATCC 33912 / PCC 7942 / FACHB-805) (Anacystis nidulans R2)).